The chain runs to 349 residues: NADP-dependent alcohol dehydrogenase C 1 (349 aa).

Zn(2+) contacts are provided by C41, H63, C94, C97, C100, C108, and C159. K210 participates in a covalent cross-link: Isoglutamyl lysine isopeptide (Lys-Gln) (interchain with Q-Cter in protein Pup).

It belongs to the zinc-containing alcohol dehydrogenase family. Zn(2+) is required as a cofactor.

It catalyses the reaction a primary alcohol + NADP(+) = an aldehyde + NADPH + H(+). Its function is as follows. Prefers aldehydes over alcohols. The sequence is that of NADP-dependent alcohol dehydrogenase C 1 (adhc1) from Mycolicibacterium smegmatis (strain ATCC 700084 / mc(2)155) (Mycobacterium smegmatis).